Here is a 128-residue protein sequence, read N- to C-terminus: NADPH-dependent 7-cyano-7-deazaguanine reductase (128 aa).

Cys-39 functions as the Thioimide intermediate in the catalytic mechanism. Asp-46 (proton donor) is an active-site residue. Substrate contacts are provided by residues 61-63 (IEL) and 80-81 (HE).

The protein belongs to the GTP cyclohydrolase I family. QueF type 1 subfamily.

The protein localises to the cytoplasm. The catalysed reaction is 7-aminomethyl-7-carbaguanine + 2 NADP(+) = 7-cyano-7-deazaguanine + 2 NADPH + 3 H(+). It functions in the pathway tRNA modification; tRNA-queuosine biosynthesis. Catalyzes the NADPH-dependent reduction of 7-cyano-7-deazaguanine (preQ0) to 7-aminomethyl-7-deazaguanine (preQ1). The chain is NADPH-dependent 7-cyano-7-deazaguanine reductase from Magnetococcus marinus (strain ATCC BAA-1437 / JCM 17883 / MC-1).